A 410-amino-acid chain; its full sequence is Adenosine receptor A2a (410 aa).

At 1-4 (MGSS) the chain is on the extracellular side. The chain crosses the membrane as a helical span at residues 5-29 (VYIMVELAIAVLAILGNVLVCWAVW). Topologically, residues 30-39 (INSNLQNVTN) are cytoplasmic. The chain crosses the membrane as a helical span at residues 40 to 63 (FFVVSLAAADIAVGVLAIPFAITI). Residues 64–74 (STGFCAACHGC) lie on the Extracellular side of the membrane. Intrachain disulfides connect Cys-68-Cys-154, Cys-71-Cys-143, and Cys-74-Cys-161. Residues 75-97 (LFFACFVLVLTQSSIFSLLAIAI) traverse the membrane as a helical segment. The Cytoplasmic segment spans residues 98 to 117 (DRYIAIRIPLRYNGLVTGMR). Residues 118–140 (AKGIIAICWVLSFAIGLTPMLGW) form a helical membrane-spanning segment. At 141–168 (NNCSQKDENSTKTCGEGRVTCLFEDVVP) the chain is on the extracellular side. N-linked (GlcNAc...) asparagine glycosylation is found at Asn-142 and Asn-149. Glu-164 contributes to the adenosine binding site. Residues 169 to 193 (MNYMVYYNFFAFVLLPLLLMLAIYL) traverse the membrane as a helical segment. At 194 to 229 (RIFLAARRQLKQMESQPLPGERTRSTLQKEVHAAKS) the chain is on the cytoplasmic side. Residues 230–253 (LAIIVGLFALCWLPLHIINCFTFF) traverse the membrane as a helical segment. An adenosine-binding site is contributed by Asn-248. A disulfide bridge links Cys-254 with Cys-257. The Extracellular portion of the chain corresponds to 254 to 261 (CSTCQHAP). Residues 262-285 (PWLMYLAIILSHSNSVVNPFIYAY) form a helical membrane-spanning segment. Positions 272 and 273 each coordinate adenosine. The Cytoplasmic segment spans residues 286–410 (RIREFRQTFR…ASWSSEFAPS (125 aa)). The segment at 322-410 (HSTEGEQVSL…ASWSSEFAPS (89 aa)) is interaction with GAS2L2. The tract at residues 342-410 (ANGSAPHSGR…ASWSSEFAPS (69 aa)) is disordered. A compositionally biased stretch (basic and acidic residues) spans 377–389 (TQEHQEGQEHPGL). The segment covering 401-410 (ASWSSEFAPS) has biased composition (polar residues).

The protein belongs to the G-protein coupled receptor 1 family. In terms of assembly, interacts (via cytoplasmic C-terminal domain) with USP4; the interaction is direct. May interact with DRD4. Interacts with NECAB2. Interacts (via cytoplasmic C-terminal domain) with GAS2L2; interaction enhances receptor-mediated adenylyl cyclase activity. In terms of processing, ubiquitinated. Deubiquitinated by USP4; leading to stabilization and expression at the cell surface.

Its subcellular location is the cell membrane. Its function is as follows. Receptor for adenosine. The activity of this receptor is mediated by G proteins which activate adenylyl cyclase. The chain is Adenosine receptor A2a (Adora2a) from Mus musculus (Mouse).